Consider the following 428-residue polypeptide: D-amino acid dehydrogenase (428 aa).

Residue 3-17 participates in FAD binding; that stretch reads VVILGSGVVGVASAY.

The protein belongs to the DadA oxidoreductase family. It depends on FAD as a cofactor.

It carries out the reaction a D-alpha-amino acid + A + H2O = a 2-oxocarboxylate + AH2 + NH4(+). It functions in the pathway amino-acid degradation; D-alanine degradation; NH(3) and pyruvate from D-alanine: step 1/1. Functionally, oxidative deamination of D-amino acids. In Burkholderia multivorans (strain ATCC 17616 / 249), this protein is D-amino acid dehydrogenase.